The chain runs to 1213 residues: A disintegrin and metalloproteinase with thrombospondin motifs 19 (1213 aa).

The N-terminal stretch at 1–27 is a signal peptide; it reads MGKNREMRLTHICCCCLLYQLGFLSNG. Residues 28 to 322 constitute a propeptide that is removed on maturation; it reads IVSELQFAPD…KIAESGRGKR (295 aa). Disordered regions lie at residues 49 to 161 and 192 to 215; these read WRRE…PPPA and FLAP…AASA. Residues 52 to 71 are compositionally biased toward gly residues; it reads EPVDPAGGSGGSADPGWVRG. The span at 110–119 shows a compositional bias: acidic residues; it reads RPPPPSEGEE. Over residues 120–139 the composition is skewed to low complexity; the sequence is DEELESQELPRGSSGAAALS. Pro residues predominate over residues 140 to 155; that stretch reads PGAPASWQPPPPPQPP. N-linked (GlcNAc...) asparagine glycosylation is present at Asn266. Residues 298–305 carry the Cysteine switch motif; that stretch reads HYCGIISD. Cys300 is a Zn(2+) binding site. A Peptidase M12B domain is found at 331–551; it reads YNIETVVVAD…KASNCLLQTN (221 aa). Disulfide bonds link Cys407–Cys472, Cys447–Cys454, Cys466–Cys546, Cys505–Cys530, Cys575–Cys599, Cys586–Cys607, Cys594–Cys626, Cys620–Cys631, Cys651–Cys686, Cys655–Cys691, and Cys666–Cys676. His488 provides a ligand contact to Zn(2+). The active site involves Glu489. 2 residues coordinate Zn(2+): His492 and His498. In terms of domain architecture, Disintegrin spans 552-639; it reads PQSVNSVMVP…ECTSRTSAPE (88 aa). A TSP type-1 1 domain is found at 640-692; it reads HLAGEWSLWSPCSRTCSAGISSRERKCPGLDSEARDCNGPRKQYRICENPPCP. Residues 797–920 are spacer; the sequence is IIKGDFNHTR…PENQSSKAPE (124 aa). N-linked (GlcNAc...) asparagine glycans are attached at residues Asn803, Asn913, Asn955, and Asn1015. 4 TSP type-1 domains span residues 921-981, 982-1043, 1045-1089, and 1093-1150; these read PLFM…NEQP, CQTR…QDCM, VWEA…EDCE, and KCYV…QPCN. 3 disulfides stabilise this stretch: Cys994-Cys1037, Cys998-Cys1042, and Cys1009-Cys1026. In terms of domain architecture, PLAC spans 1166-1205; it reads LTFKCLGDQWPVYCRVIREKNLCQDMRWYQRCCETCRDFY.

The cofactor is Zn(2+). In terms of processing, the precursor is cleaved by a furin endopeptidase. Glycosylated. Can be O-fucosylated by POFUT2 on a serine or a threonine residue found within the consensus sequence C1-X(2)-(S/T)-C2-G of the TSP type-1 repeat domains where C1 and C2 are the first and second cysteine residue of the repeat, respectively. Fucosylated repeats can then be further glycosylated by the addition of a beta-1,3-glucose residue by the glucosyltransferase, B3GALTL. Fucosylation mediates the efficient secretion of ADAMTS family members. Can also be C-glycosylated with one or two mannose molecules on tryptophan residues within the consensus sequence W-X-X-W of the TPRs, and N-glycosylated. These other glycosylations can also facilitate secretion. As to expression, expressed in fetal lung, but not in any adult tissues examined. Expression was detected in an osteosarcoma cDNA library.

Its subcellular location is the secreted. The protein localises to the extracellular space. It localises to the extracellular matrix. The polypeptide is A disintegrin and metalloproteinase with thrombospondin motifs 19 (ADAMTS19) (Homo sapiens (Human)).